Consider the following 1296-residue polypeptide: Aggregation substance (1296 aa).

The N-terminal stretch at 1 to 43 (MKQQTEVKKRFKMYKAKKHWVVAPILFIGVLGVVGLATDDVQA) is a signal peptide. Disordered stretches follow at residues 48–188 (TQPG…KPAE) and 1221–1245 (HTPEKPQTPPEKTVIVPPTPKTPQA). Positions 89-99 (KVEEVASEKNG) are enriched in basic and acidic residues. Polar residues-rich tracts occupy residues 100-117 (AEQSSATPNDTTNAQQPT) and 125-138 (QEQPVVSPETTNEP). Positions 160 to 178 (KEFETPDVDKAVDEAKKDP) are enriched in basic and acidic residues. The LPXTG sorting signal signature appears at 1261–1265 (LPQTG). The residue at position 1264 (T1264) is a Pentaglycyl murein peptidoglycan amidated threonine. Residues 1265 to 1296 (GEKQNVLLTVAGSLAAMLGLAGLGFKRRKETK) constitute a propeptide, removed by sortase.

It belongs to the antigen I/II family.

The protein resides in the secreted. Its subcellular location is the cell wall. Aggregation substance allows donor and recipient strains to form tight aggregates which allow the non-motile bacteria to maintain physical contact over a period of time sufficient to permit conjugative transfer of the sex pheromone plasmid from donor to recipient strains. The sequence is that of Aggregation substance (asa1) from Enterococcus faecalis (strain ATCC 700802 / V583).